A 72-amino-acid polypeptide reads, in one-letter code: Protein RALF-like 20 (72 aa).

A signal peptide spans 1–27 (MVLSKKTIMQSFALMIILSIVMSTTEA). 2 disulfides stabilise this stretch: Cys-43-Cys-51 and Cys-63-Cys-69.

Belongs to the plant rapid alkalinization factor (RALF) family.

It localises to the secreted. In terms of biological role, cell signaling peptide that may regulate plant stress, growth, and development. Mediates a rapid alkalinization of extracellular space by mediating a transient increase in the cytoplasmic Ca(2+) concentration leading to a calcium-dependent signaling events through a cell surface receptor and a concomitant activation of some intracellular mitogen-activated protein kinases. The chain is Protein RALF-like 20 (RALFL20) from Arabidopsis thaliana (Mouse-ear cress).